Here is a 1607-residue protein sequence, read N- to C-terminus: Abnormal cell migration protein 38 (1607 aa).

12 disordered regions span residues 14–52, 67–93, 167–222, 326–425, 459–478, 549–594, 845–931, 1017–1061, 1141–1241, 1319–1378, 1392–1445, and 1517–1607; these read EFNKRADSPRAAGNYDFESGNIDNIPLNDDGPLSPSQDF, RLSPNGGLNREDQQPGPSGNNDGQYHV, STSY…AAQA, GSSA…PPSQ, SPNTNGPSSQLQRPQSGMDQ, MVHR…QHSY, YDEN…PETE, SVQV…DYDM, EPSP…VTPK, ETPN…KGQL, FANV…PQAV, and KVKT…STDP. 2 stretches are compositionally biased toward polar residues: residues 81–93 and 179–191; these read PGPSGNNDGQYHV and PSGNSSSQINHQQ. The span at 195-205 shows a compositional bias: low complexity; sequence VPQVQQQPAKP. Positions 206–218 are enriched in basic residues; the sequence is KTTKKRPPPKKKT. Residues 327–341 are compositionally biased toward low complexity; it reads SSASSSAQPSQPAKK. 2 stretches are compositionally biased toward polar residues: residues 349–371 and 379–425; these read VPNTAKNLAQNQQIMPPQAQITP and PTTT…PPSQ. A compositionally biased stretch (low complexity) spans 585–594; it reads NSHSQSQHSY. A compositionally biased stretch (acidic residues) spans 858–871; that stretch reads EEPESESESEPEAE. 2 stretches are compositionally biased toward basic and acidic residues: residues 872 to 886 and 907 to 917; these read PEPKKDNFAEPEPAR and YRNESESTFDW. Composition is skewed to low complexity over residues 1333 to 1354, 1395 to 1419, and 1584 to 1601; these read PNIPSTSTSIPPASTVVSSVSV, VPSSKPSTSSAVSATPSTSSAVSAK, and LLGTSNMNSSTNGSSSGL.

As to expression, expressed in gonad distal tip cells and gonad sheath cells.

It is found in the nucleus. It localises to the cytoplasm. Functionally, during gonad development, involved in distal tip cell (DTC) migration from the dorsal side of the hermaphrodite body to the midbody which allows for the formation of gonad arms. Role in gonad DTC migration may be in association with integrin related proteins ina-1 and mig-15. This chain is Abnormal cell migration protein 38, found in Caenorhabditis elegans.